The chain runs to 396 residues: Acetylornithine aminotransferase 2 (396 aa).

Residues 102 to 103 (GA) and F134 contribute to the pyridoxal 5'-phosphate site. Position 137 (R137) interacts with N(2)-acetyl-L-ornithine. Residue 219–222 (DEVQ) participates in pyridoxal 5'-phosphate binding. K248 is subject to N6-(pyridoxal phosphate)lysine. Position 276 (T276) interacts with pyridoxal 5'-phosphate.

This sequence belongs to the class-III pyridoxal-phosphate-dependent aminotransferase family. ArgD subfamily. As to quaternary structure, homodimer. The cofactor is pyridoxal 5'-phosphate.

It localises to the cytoplasm. The enzyme catalyses N(2)-acetyl-L-ornithine + 2-oxoglutarate = N-acetyl-L-glutamate 5-semialdehyde + L-glutamate. The protein operates within amino-acid biosynthesis; L-arginine biosynthesis; N(2)-acetyl-L-ornithine from L-glutamate: step 4/4. The protein is Acetylornithine aminotransferase 2 of Bordetella bronchiseptica (strain ATCC BAA-588 / NCTC 13252 / RB50) (Alcaligenes bronchisepticus).